The following is an 87-amino-acid chain: uncharacterized protein (87 aa).

The protein to H.pylori HP0495/JHP0447.

This is an uncharacterized protein from Campylobacter jejuni subsp. jejuni serotype O:2 (strain ATCC 700819 / NCTC 11168).